A 267-amino-acid chain; its full sequence is Tryptophan synthase alpha chain (267 aa).

Residues glutamate 49 and aspartate 60 each act as proton acceptor in the active site.

Belongs to the TrpA family. In terms of assembly, tetramer of two alpha and two beta chains.

The catalysed reaction is (1S,2R)-1-C-(indol-3-yl)glycerol 3-phosphate + L-serine = D-glyceraldehyde 3-phosphate + L-tryptophan + H2O. It participates in amino-acid biosynthesis; L-tryptophan biosynthesis; L-tryptophan from chorismate: step 5/5. The alpha subunit is responsible for the aldol cleavage of indoleglycerol phosphate to indole and glyceraldehyde 3-phosphate. The polypeptide is Tryptophan synthase alpha chain (Acinetobacter baumannii (strain AB307-0294)).